Reading from the N-terminus, the 535-residue chain is Secreted lipase 5 (535 aa).

Residues 1–17 (MHLKSLLLAALPLLLEA) form the signal peptide. N32 and N119 each carry an N-linked (GlcNAc...) asparagine glycan. S241 (acyl-ester intermediate) is an active-site residue. N-linked (GlcNAc...) asparagine glycans are attached at residues N282, N341, N347, and N432.

The protein belongs to the type-B carboxylesterase/lipase family.

Its subcellular location is the secreted. The catalysed reaction is a carboxylic ester + H2O = an alcohol + a carboxylate + H(+). Secreted lipase involved in plant virulence. Has a substrate preference for p-nitrophenyl esters with a carbon chain length of C8 (p-nitrophenyl caprylate). This Gibberella zeae (strain ATCC MYA-4620 / CBS 123657 / FGSC 9075 / NRRL 31084 / PH-1) (Wheat head blight fungus) protein is Secreted lipase 5.